Reading from the N-terminus, the 227-residue chain is Leucyl/phenylalanyl-tRNA--protein transferase (227 aa).

Belongs to the L/F-transferase family.

The protein localises to the cytoplasm. It catalyses the reaction N-terminal L-lysyl-[protein] + L-leucyl-tRNA(Leu) = N-terminal L-leucyl-L-lysyl-[protein] + tRNA(Leu) + H(+). The catalysed reaction is N-terminal L-arginyl-[protein] + L-leucyl-tRNA(Leu) = N-terminal L-leucyl-L-arginyl-[protein] + tRNA(Leu) + H(+). The enzyme catalyses L-phenylalanyl-tRNA(Phe) + an N-terminal L-alpha-aminoacyl-[protein] = an N-terminal L-phenylalanyl-L-alpha-aminoacyl-[protein] + tRNA(Phe). Functions in the N-end rule pathway of protein degradation where it conjugates Leu, Phe and, less efficiently, Met from aminoacyl-tRNAs to the N-termini of proteins containing an N-terminal arginine or lysine. This chain is Leucyl/phenylalanyl-tRNA--protein transferase, found in Afipia carboxidovorans (strain ATCC 49405 / DSM 1227 / KCTC 32145 / OM5) (Oligotropha carboxidovorans).